Reading from the N-terminus, the 465-residue chain is ATP synthase subunit beta 2 (465 aa).

ATP is bound at residue 148–155 (GGAGVGKT).

It belongs to the ATPase alpha/beta chains family. F-type ATPases have 2 components, CF(1) - the catalytic core - and CF(0) - the membrane proton channel. CF(1) has five subunits: alpha(3), beta(3), gamma(1), delta(1), epsilon(1). CF(0) has three main subunits: a(1), b(2) and c(9-12). The alpha and beta chains form an alternating ring which encloses part of the gamma chain. CF(1) is attached to CF(0) by a central stalk formed by the gamma and epsilon chains, while a peripheral stalk is formed by the delta and b chains.

It is found in the cell inner membrane. It catalyses the reaction ATP + H2O + 4 H(+)(in) = ADP + phosphate + 5 H(+)(out). In terms of biological role, produces ATP from ADP in the presence of a proton gradient across the membrane. The catalytic sites are hosted primarily by the beta subunits. The sequence is that of ATP synthase subunit beta 2 from Psychromonas ingrahamii (strain DSM 17664 / CCUG 51855 / 37).